The chain runs to 187 residues: NADH-quinone oxidoreductase subunit B (187 aa).

C66, C67, C131, and C161 together coordinate [4Fe-4S] cluster.

It belongs to the complex I 20 kDa subunit family. In terms of assembly, NDH-1 is composed of 14 different subunits. Subunits NuoB, C, D, E, F, and G constitute the peripheral sector of the complex. [4Fe-4S] cluster is required as a cofactor.

It localises to the cell inner membrane. The catalysed reaction is a quinone + NADH + 5 H(+)(in) = a quinol + NAD(+) + 4 H(+)(out). Its function is as follows. NDH-1 shuttles electrons from NADH, via FMN and iron-sulfur (Fe-S) centers, to quinones in the respiratory chain. Couples the redox reaction to proton translocation (for every two electrons transferred, four hydrogen ions are translocated across the cytoplasmic membrane), and thus conserves the redox energy in a proton gradient. This chain is NADH-quinone oxidoreductase subunit B, found in Rhizorhabdus wittichii (strain DSM 6014 / CCUG 31198 / JCM 15750 / NBRC 105917 / EY 4224 / RW1) (Sphingomonas wittichii).